Consider the following 443-residue polypeptide: Major royal jelly protein 7 (443 aa).

The signal sequence occupies residues 1 to 17; sequence MTRWLFMVACLGIACQG. Residues N145, N161, N178, and N321 are each glycosylated (N-linked (GlcNAc...) asparagine).

It belongs to the major royal jelly protein family. Found in and secreted from the hypopharyngeal glands of the worker honey bee (at protein level); expression peaks at 12 days post eclosion. Expressed in the brains of adult worker bees peaking at 12 days post eclosion (at protein level). Expressed in the spermatheca of adult queen bees (at protein level); Expression levels are higher in mated queens than in virgin queens.

The protein resides in the secreted. Component of royal jelly, a substance produced in the hypopharyngeal gland containing proteins, free amino acids, fatty acids, sugars and other nutrients, which is fed to developing larvae by worker nurse bees. All larvae are fed some royal jelly (also known as worker jelly) early in their development but it forms the principal source of nutrition for larvae destined to become queen bees. Produced in the spermatheca of adult queen bees, along with other major royal jelly proteins, where it may act as a nutrient supply for sperm stored by mated queens, or be involved in energy metabolism. This Apis mellifera (Honeybee) protein is Major royal jelly protein 7.